A 454-amino-acid polypeptide reads, in one-letter code: Prenyltransferase nscD (454 aa).

The protein belongs to the tryptophan dimethylallyltransferase family.

It functions in the pathway secondary metabolite biosynthesis. Its function is as follows. Prenyltransferase; part of the gene cluster that mediates the biosynthesis of neosartoricin, a prenylated anthracenone that exhibits T-cell antiproliferative activity, suggestive of a physiological role as an immunosuppressive agent. The non-reducing polyketide synthase nscA probably synthesizes and cyclizes the decaketide backbone. The hydrolase nscB then mediates the product release through hydrolysis followed by spontaneous decarboxylation. The prenyltransferase nscD catalyzes the addition of the dimethylallyl group to the aromatic C5. The FAD-dependent monooxygenase nscC is then responsible for the stereospecific hydroxylation at C2. There is no gene encoding O-acetyltransferase in the nsc gene cluster; thus, the last step of 2-O-acetylation leading to neosartoricin may be catalyzed by an unidentified O-acetyltransferase. The chain is Prenyltransferase nscD from Neosartorya fischeri (strain ATCC 1020 / DSM 3700 / CBS 544.65 / FGSC A1164 / JCM 1740 / NRRL 181 / WB 181) (Aspergillus fischerianus).